Reading from the N-terminus, the 882-residue chain is Isoamylase 2, chloroplastic (882 aa).

A chloroplast-targeting transit peptide spans 1-70 (MAAWSPSVGI…LQSYQFSKIC (70 aa)).

The protein belongs to the glycosyl hydrolase 13 family. As to quaternary structure, associates with ISA1 to form the heteromultimeric complex Iso1 required for amylopectin synthesis.

It localises to the plastid. Its subcellular location is the chloroplast. It functions in the pathway glycan biosynthesis; starch biosynthesis. Involved in the trimming of pre-amylopectin chains. Accelerates the crystallization of nascent amylopectin molecules during starch synthesis. ISA1 and ISA2 work exclusively together as a multimeric holoenzyme. ISA1-ISA2 removes preferentially branches that are very close to other branches. The chain is Isoamylase 2, chloroplastic (ISA2) from Arabidopsis thaliana (Mouse-ear cress).